Consider the following 606-residue polypeptide: Phosphomethylpyrimidine synthase (606 aa).

The interval 84-103 (EPYPARSVKPEDNGLTSSPI) is disordered. Substrate is bound by residues Asn209, Met238, Tyr267, His303, 323-325 (SRG), 364-367 (DGLR), and Glu403. His407 contributes to the Zn(2+) binding site. Tyr430 is a substrate binding site. His471 is a Zn(2+) binding site. Residues Cys551, Cys554, and Cys559 each coordinate [4Fe-4S] cluster.

This sequence belongs to the ThiC family. Homodimer. It depends on [4Fe-4S] cluster as a cofactor.

It catalyses the reaction 5-amino-1-(5-phospho-beta-D-ribosyl)imidazole + S-adenosyl-L-methionine = 4-amino-2-methyl-5-(phosphooxymethyl)pyrimidine + CO + 5'-deoxyadenosine + formate + L-methionine + 3 H(+). It functions in the pathway cofactor biosynthesis; thiamine diphosphate biosynthesis. In terms of biological role, catalyzes the synthesis of the hydroxymethylpyrimidine phosphate (HMP-P) moiety of thiamine from aminoimidazole ribotide (AIR) in a radical S-adenosyl-L-methionine (SAM)-dependent reaction. This Bartonella tribocorum (strain CIP 105476 / IBS 506) protein is Phosphomethylpyrimidine synthase.